A 214-amino-acid chain; its full sequence is LOB domain-containing protein 7 (214 aa).

The region spanning 12–113 is the LOB domain; it reads TACAACKHQR…TELNLTRQQI (102 aa).

It belongs to the LOB domain-containing protein family.

The protein is LOB domain-containing protein 7 (LBD7) of Arabidopsis thaliana (Mouse-ear cress).